The sequence spans 163 residues: Neurotrophin-3 (163 aa).

An N-terminal signal peptide occupies residues 1-3; sequence IQS. Residues 4–119 constitute a propeptide that is removed on maturation; that stretch reads TSMDQGILTE…ALNRTSRRKR (116 aa). Disordered stretches follow at residues 38–60 and 90–131; these read ARTK…ATAS and LLSE…YSVC. N-linked (GlcNAc...) asparagine glycosylation occurs at Asn-112.

Belongs to the NGF-beta family.

The protein localises to the secreted. In terms of biological role, seems to promote the survival of visceral and proprioceptive sensory neurons. The polypeptide is Neurotrophin-3 (NTF3) (Eunectes notaeus (Yellow anaconda)).